The following is a 433-amino-acid chain: Type I acyl-CoA thioesterase mpaH' (433 aa).

Residues 58-246 (HGVGLPKELY…IKALFGTTAD (189 aa)) form an abhydrolase domain region. Val60 is a binding site for substrate. Ser139 functions as the Nucleophile in the catalytic mechanism. Phe140 is a substrate binding site. Active-site residues include Asp163 and His365.

The protein belongs to the AB hydrolase superfamily. MpaH hydrolase family. Homodimer.

It localises to the peroxisome matrix. The enzyme catalyses mycophenolyl-CoA + H2O = mycophenolate + CoA + H(+). Its pathway is secondary metabolite biosynthesis; terpenoid biosynthesis. Its function is as follows. Type I acyl-CoA thioesterase; part of the gene cluster that mediates the biosynthesis of mycophenolic acid (MPA), the first isolated antibiotic natural product in the world obtained from a culture of Penicillium brevicompactum in 1893. MpaH' acts as a peroxisomal acyl-CoA hydrolase that converts MPA-CoA into the final product MPA. The first step of the pathway is the synthesis of 5-methylorsellinic acid (5MOA) by the cytosolic polyketide synthase mpaC. 5MOA is then converted to the phthalide compound 5,7-dihydroxy-4,6-dimethylphthalide (DHMP) by the endoplasmic reticulum-bound cytochrome P450 monooxygenase mpaDE. MpaDE first catalyzes hydroxylation of 5-MOA to 4,6-dihydroxy-2-(hydroxymethyl)-3-methylbenzoic acid (DHMB). MpaDE then acts as a lactone synthase that catalyzes the ring closure to convert DHMB into DHMP. The next step is the prenylation of DHMP by the Golgi apparatus-associated prenyltransferase mpaA to yield farnesyl-DHMP (FDHMP). The ER-bound oxygenase mpaB then mediates the oxidative cleavage the C19-C20 double bond in FDHMP to yield FDHMP-3C via a mycophenolic aldehyde intermediate. The O-methyltransferase mpaG catalyzes the methylation of FDHMP-3C to yield MFDHMP-3C. After the cytosolic methylation of FDHMP-3C, MFDHMP-3C enters into peroxisomes probably via free diffusion due to its low molecular weight. Upon a peroxisomal CoA ligation reaction, catalyzed by a beta-oxidation component enzyme acyl-CoA ligase ACL891, MFDHMP-3C-CoA would then be restricted to peroxisomes for the following beta-oxidation pathway steps. The peroxisomal beta-oxidation machinery than converts MFDHMP-3C-CoA into MPA_CoA, via a beta-oxidation chain-shortening process. Finally mpaH acts as a peroxisomal acyl-CoA hydrolase with high substrate specificity toward MPA-CoA to release the final product MPA. The protein is Type I acyl-CoA thioesterase mpaH' of Penicillium brevicompactum.